A 135-amino-acid chain; its full sequence is Small ribosomal subunit protein uS9 (135 aa).

Basic and acidic residues predominate over residues 107-118 (LVGDPRRTEPHK). The segment at 107 to 135 (LVGDPRRTEPHKPNRSTKGPRAKRQKSYR) is disordered. Basic residues predominate over residues 119–135 (PNRSTKGPRAKRQKSYR).

This sequence belongs to the universal ribosomal protein uS9 family. In terms of assembly, part of the 30S ribosomal subunit.

The protein is Small ribosomal subunit protein uS9 of Pyrococcus furiosus (strain ATCC 43587 / DSM 3638 / JCM 8422 / Vc1).